We begin with the raw amino-acid sequence, 357 residues long: Large ribosomal subunit protein mL45 (357 aa).

The segment at 333-357 (EAKALPLRTTEKLEEAKKEKEQQEI) is disordered. Over residues 341–357 (TTEKLEEAKKEKEQQEI) the composition is skewed to basic and acidic residues.

The protein belongs to the mitochondrion-specific ribosomal protein mL45 family.

It is found in the mitochondrion. The chain is Large ribosomal subunit protein mL45 (mrpl-45) from Caenorhabditis elegans.